The chain runs to 291 residues: AMTDLLVSILVMPISIPYTITQTWSFGQLLCDIWLSSDITCCTASILHLCVIALDRYWAITDALEYSKRRTAGHAAAMIAIVWAISICISIPPLFWRQARAHEEISDCLVNTSQISYTIYSTCGAFYIPSLLLIILYGRIYRAARNRILNPPSLYGKRFTTAHLITGSAGSSLCSLNPSLHEGHSHSAGSPLFFNHVKIKLADSVLERKRISAARERKATKTLGIILGAFIICWLPFFVASLVLPICRDSCWIHPALFDFFTWLGYLNSLINPIIYTVFNEEFRQAFQKVV.

A helical membrane pass occupies residues 30 to 54 (LCDIWLSSDITCCTASILHLCVIAL). Cysteine 31 and cysteine 108 are disulfide-bonded. Residues aspartate 38 and cysteine 42 each coordinate serotonin. Residues 55 to 57 (DRY) carry the DRY motif; important for ligand-induced conformation changes motif. A helical membrane pass occupies residues 75-96 (AAAMIAIVWAISICISIPPLFW). Asparagine 111 carries an N-linked (GlcNAc...) asparagine glycan. 3 helical membrane passes run 115 to 138 (ISYT…ILYG), 221 to 246 (KTLG…VLPI), and 256 to 279 (ALFD…YTVF). Serine 241 contacts serotonin. An NPxxY motif; important for ligand-induced conformation changes and signaling motif is present at residues 272 to 276 (NPIIY).

This sequence belongs to the G-protein coupled receptor 1 family. As to quaternary structure, homodimer. Heterodimer with HTR1B.

Its subcellular location is the cell membrane. Its function is as follows. G-protein coupled receptor for 5-hydroxytryptamine (serotonin). Also functions as a receptor for ergot alkaloid derivatives, various anxiolytic and antidepressant drugs and other psychoactive substances. Ligand binding causes a conformation change that triggers signaling via guanine nucleotide-binding proteins (G proteins) and modulates the activity of downstream effectors, such as adenylate cyclase. HTR1D is coupled to G(i)/G(o) G alpha proteins and mediates inhibitory neurotransmission by inhibiting adenylate cyclase activity. Regulates the release of 5-hydroxytryptamine in the brain, and thereby affects neural activity. May also play a role in regulating the release of other neurotransmitters. May play a role in vasoconstriction. This Sus scrofa (Pig) protein is 5-hydroxytryptamine receptor 1D (HTR1D).